A 732-amino-acid polypeptide reads, in one-letter code: 1,4-alpha-glucan branching enzyme GlgB (732 aa).

Asp-408 acts as the Nucleophile in catalysis. Catalysis depends on Glu-461, which acts as the Proton donor.

The protein belongs to the glycosyl hydrolase 13 family. GlgB subfamily. As to quaternary structure, monomer.

The catalysed reaction is Transfers a segment of a (1-&gt;4)-alpha-D-glucan chain to a primary hydroxy group in a similar glucan chain.. The protein operates within glycan biosynthesis; glycogen biosynthesis. Its function is as follows. Catalyzes the formation of the alpha-1,6-glucosidic linkages in glycogen by scission of a 1,4-alpha-linked oligosaccharide from growing alpha-1,4-glucan chains and the subsequent attachment of the oligosaccharide to the alpha-1,6 position. The polypeptide is 1,4-alpha-glucan branching enzyme GlgB (Rhodococcus jostii (strain RHA1)).